The chain runs to 956 residues: Translation initiation factor IF-2 (956 aa).

The segment at 33-370 is disordered; sequence SHASSVEEAD…PVTERKFHEL (338 aa). Over residues 46–60 the composition is skewed to polar residues; sequence IASSFSAGVTKNVQA. The span at 63 to 73 shows a compositional bias: basic and acidic residues; it reads AKDKQVAEQKA. A compositionally biased stretch (low complexity) spans 76 to 100; that stretch reads AKATTPQPAASKAAEKPAAATQEAS. 3 stretches are compositionally biased toward basic and acidic residues: residues 112-125, 134-143, and 179-192; these read FKAE…EQVA, SNDRKSDYRQ, and NDGH…DKNR. Low complexity predominate over residues 199–213; sequence RQQDTGRQGQTQAGA. Basic and acidic residues-rich tracts occupy residues 234–258 and 266–276; these read ARQR…RQEA and QTEDKKHREAS. Residues 277 to 293 are compositionally biased toward low complexity; it reads AKATESVASMAAASVAK. The span at 303 to 320 shows a compositional bias: basic and acidic residues; sequence NRPDKGHDRDHGLEDGQK. Positions 325–343 are enriched in low complexity; that stretch reads SWNSQNQVRNQKNSNWNNN. Over residues 344-354 the composition is skewed to basic residues; the sequence is KKNKKGKHHKN. The 170-residue stretch at 457–626 folds into the tr-type G domain; sequence ERAPVVTIMG…LLVAEVEELK (170 aa). The G1 stretch occupies residues 466–473; the sequence is GHVDHGKT. A GTP-binding site is contributed by 466–473; the sequence is GHVDHGKT. The segment at 491–495 is G2; the sequence is GITQH. A G3 region spans residues 512 to 515; the sequence is DTPG. Residues 512-516 and 566-569 contribute to the GTP site; these read DTPGH and NKID. Residues 566 to 569 form a G4 region; the sequence is NKID. The segment at 602–604 is G5; sequence SAK.

The protein belongs to the TRAFAC class translation factor GTPase superfamily. Classic translation factor GTPase family. IF-2 subfamily.

It is found in the cytoplasm. One of the essential components for the initiation of protein synthesis. Protects formylmethionyl-tRNA from spontaneous hydrolysis and promotes its binding to the 30S ribosomal subunits. Also involved in the hydrolysis of GTP during the formation of the 70S ribosomal complex. This Streptococcus equi subsp. equi (strain 4047) protein is Translation initiation factor IF-2.